The following is a 654-amino-acid chain: Pentatricopeptide repeat-containing protein At4g19191, mitochondrial (654 aa).

Residues 1-65 (MSLIHRRLYR…PFVAKACARL (65 aa)) constitute a mitochondrion transit peptide. 13 PPR repeats span residues 86 to 116 (DVFV…MPER), 117 to 151 (DATT…EITP), 152 to 186 (DSVT…GVDV), 187 to 217 (QVTV…IDRG), 220 to 254 (TVVS…EFKP), 255 to 289 (DLST…GTDQ), 290 to 320 (DIEA…MTSR), 321 to 355 (TCVS…GEKP), 356 to 390 (DLVT…GCKR), 392 to 422 (NVMI…TPEK), 423 to 457 (TVVT…DYKP), 458 to 488 (NHIT…MKQV), and 494 to 524 (GLDH…MSAK). The segment at 529-604 (IWGALLNACK…YPGESVIQVN (76 aa)) is type E motif. The segment at 605 to 635 (GKNHSFTVGEHGHVENEVIYFTLNGLSLFAK) is type E(+) motif.

This sequence belongs to the PPR family. PCMP-E subfamily.

The protein resides in the mitochondrion. This chain is Pentatricopeptide repeat-containing protein At4g19191, mitochondrial (PCMP-E1), found in Arabidopsis thaliana (Mouse-ear cress).